Reading from the N-terminus, the 164-residue chain is Lipoprotein signal peptidase (164 aa).

Transmembrane regions (helical) follow at residues 11 to 31 (YWVLALAAIVLDQWSKWAVLS), 41 to 61 (VIPSFFDLTLVYNPGAAFSFL), 64 to 84 (QGGWQKYFFLVLAVAVSAYLV), and 92 to 112 (FAALGKIGAAMIIGGASGNVI). Catalysis depends on residues aspartate 122 and aspartate 140. A helical membrane pass occupies residues 132-152 (FYPAFNIADSFICVGAVLAVL).

Belongs to the peptidase A8 family.

It localises to the cell inner membrane. It catalyses the reaction Release of signal peptides from bacterial membrane prolipoproteins. Hydrolyzes -Xaa-Yaa-Zaa-|-(S,diacylglyceryl)Cys-, in which Xaa is hydrophobic (preferably Leu), and Yaa (Ala or Ser) and Zaa (Gly or Ala) have small, neutral side chains.. It participates in protein modification; lipoprotein biosynthesis (signal peptide cleavage). This protein specifically catalyzes the removal of signal peptides from prolipoproteins. The polypeptide is Lipoprotein signal peptidase (Neisseria gonorrhoeae (strain ATCC 700825 / FA 1090)).